Reading from the N-terminus, the 373-residue chain is Zinc finger protein CONSTANS-LIKE 10 (373 aa).

Residues Cys-5, Cys-8, Cys-28, His-33, Cys-48, Cys-51, Cys-71, and His-76 each contribute to the Zn(2+) site. The B box-type 1; atypical zinc finger occupies 5 to 47; that stretch reads CDFCGEQRSMVYCRSDAACLCLSCDRNVHSANALSKRHSRTLV. The segment at 48 to 92 adopts a B box-type 2; atypical zinc-finger fold; sequence CERCNAQPASVRCSDERVSLCQNCDWSGHDGKNSTTTSHHKRQTI. A disordered region spans residues 152 to 172; that stretch reads PETSSAAQGMDHSSVPENSSM. One can recognise a CCT domain in the interval 316–358; the sequence is RNNAVMRYKEKKKARKFDKRVRYVSRKERADVRRRVKGRFVKS.

It belongs to the CONSTANS family.

Its subcellular location is the nucleus. This chain is Zinc finger protein CONSTANS-LIKE 10 (COL10), found in Arabidopsis thaliana (Mouse-ear cress).